The sequence spans 118 residues: Large ribosomal subunit protein bL20 (118 aa).

It belongs to the bacterial ribosomal protein bL20 family.

Its function is as follows. Binds directly to 23S ribosomal RNA and is necessary for the in vitro assembly process of the 50S ribosomal subunit. It is not involved in the protein synthesizing functions of that subunit. The sequence is that of Large ribosomal subunit protein bL20 from Agathobacter rectalis (strain ATCC 33656 / DSM 3377 / JCM 17463 / KCTC 5835 / VPI 0990) (Eubacterium rectale).